Reading from the N-terminus, the 319-residue chain is L-lactate dehydrogenase 2 (319 aa).

Residues Val16, Asp37, Lys42, Tyr68, and 82-83 (GA) each bind NAD(+). The substrate site is built by Gln85 and Arg91. Residues Ser104, 121–123 (AAN), and Ser146 contribute to the NAD(+) site. 123-126 (NPVD) serves as a coordination point for substrate. Position 151–154 (151–154 (DSAR)) interacts with substrate. His178 serves as the catalytic Proton acceptor. Position 222 is a phosphotyrosine (Tyr222). Thr231 is a substrate binding site.

It belongs to the LDH/MDH superfamily. LDH family. In terms of assembly, homotetramer.

The protein resides in the cytoplasm. It catalyses the reaction (S)-lactate + NAD(+) = pyruvate + NADH + H(+). It functions in the pathway fermentation; pyruvate fermentation to lactate; (S)-lactate from pyruvate: step 1/1. Its function is as follows. Catalyzes the conversion of lactate to pyruvate (Potential). Contributes to S.aureus growth during nitrosative stress in both aerobically and anaerobically cultured cells, despite playing a secondary role in this resistance mechanism. The chain is L-lactate dehydrogenase 2 from Staphylococcus aureus (strain Mu3 / ATCC 700698).